Reading from the N-terminus, the 495-residue chain is Phosphomethylpyrimidine synthase (495 aa).

Substrate is bound by residues Asn125, Met154, Tyr183, His219, 239–241 (SRG), 280–283 (DGLR), and Glu319. His323 contributes to the Zn(2+) binding site. Tyr346 serves as a coordination point for substrate. Residue His387 participates in Zn(2+) binding. [4Fe-4S] cluster is bound by residues Cys467, Cys470, and Cys475.

This sequence belongs to the ThiC family. [4Fe-4S] cluster is required as a cofactor.

It carries out the reaction 5-amino-1-(5-phospho-beta-D-ribosyl)imidazole + S-adenosyl-L-methionine = 4-amino-2-methyl-5-(phosphooxymethyl)pyrimidine + CO + 5'-deoxyadenosine + formate + L-methionine + 3 H(+). It functions in the pathway cofactor biosynthesis; thiamine diphosphate biosynthesis. Functionally, catalyzes the synthesis of the hydroxymethylpyrimidine phosphate (HMP-P) moiety of thiamine from aminoimidazole ribotide (AIR) in a radical S-adenosyl-L-methionine (SAM)-dependent reaction. This chain is Phosphomethylpyrimidine synthase, found in Leptospira interrogans serogroup Icterohaemorrhagiae serovar Lai (strain 56601).